Here is a 453-residue protein sequence, read N- to C-terminus: UDP-N-acetylmuramate--L-alanine ligase (453 aa).

112-118 (GTHGKTT) is an ATP binding site.

Belongs to the MurCDEF family.

It is found in the cytoplasm. The catalysed reaction is UDP-N-acetyl-alpha-D-muramate + L-alanine + ATP = UDP-N-acetyl-alpha-D-muramoyl-L-alanine + ADP + phosphate + H(+). It functions in the pathway cell wall biogenesis; peptidoglycan biosynthesis. In terms of biological role, cell wall formation. The protein is UDP-N-acetylmuramate--L-alanine ligase of Bdellovibrio bacteriovorus (strain ATCC 15356 / DSM 50701 / NCIMB 9529 / HD100).